Reading from the N-terminus, the 136-residue chain is Acidic phospholipase A2 EC-I (136 aa).

An N-terminal signal peptide occupies residues 1–16 (MKTLWIVAVWLIAVEG). 7 cysteine pairs are disulfide-bonded: Cys42/Cys129, Cys44/Cys60, Cys59/Cys111, Cys65/Cys136, Cys66/Cys104, Cys73/Cys97, and Cys91/Cys102. Residues Tyr43, Gly45, and Gly47 each contribute to the Ca(2+) site. His63 is an active-site residue. Position 64 (Asp64) interacts with Ca(2+). Asp105 is a catalytic residue. A may be responsible for inhibition of the platelet-aggregation activity region spans residues 112–133 (LGENVNTYDKKYKSYEDCTEEV).

The protein belongs to the phospholipase A2 family. Group II subfamily. D49 sub-subfamily. Monomer. Requires Ca(2+) as cofactor. As to expression, expressed by the venom gland.

The protein localises to the secreted. It carries out the reaction a 1,2-diacyl-sn-glycero-3-phosphocholine + H2O = a 1-acyl-sn-glycero-3-phosphocholine + a fatty acid + H(+). In terms of biological role, snake venom phospholipase A2 (PLA2) that inhibits human platelet aggregation induced by ADP, collagen and epinephrin (possibly by binding the platelet receptor alpha-IIb/beta-III) and induces mild edema in the foot pads of mice. PLA2 catalyzes the calcium-dependent hydrolysis of the 2-acyl groups in 3-sn-phosphoglycerides. The protein is Acidic phospholipase A2 EC-I of Echis carinatus (Saw-scaled viper).